The primary structure comprises 530 residues: Ubiquitin carboxyl-terminal hydrolase 17-like protein 18 (530 aa).

Residues 80–375 (AGLQNMGNTC…QAYVLFYIQK (296 aa)) enclose the USP domain. The Nucleophile role is filled by Cys89. The active-site Proton acceptor is the His334. Composition is skewed to basic and acidic residues over residues 382–392 (SESVSRGREPR) and 398–413 (DTDR…RDHP). Disordered stretches follow at residues 382-414 (SESV…DHPC) and 509-530 (RGRA…LVCQ). Over residues 510 to 524 (GRARRSKGKNKHSKR) the composition is skewed to basic residues.

Belongs to the peptidase C19 family. USP17 subfamily.

The protein localises to the nucleus. Its subcellular location is the endoplasmic reticulum. It catalyses the reaction Thiol-dependent hydrolysis of ester, thioester, amide, peptide and isopeptide bonds formed by the C-terminal Gly of ubiquitin (a 76-residue protein attached to proteins as an intracellular targeting signal).. In terms of biological role, deubiquitinating enzyme that removes conjugated ubiquitin from specific proteins to regulate different cellular processes that may include cell proliferation, progression through the cell cycle, apoptosis, cell migration, and the cellular response to viral infection. This is Ubiquitin carboxyl-terminal hydrolase 17-like protein 18 (USP17L18) from Homo sapiens (Human).